Reading from the N-terminus, the 454-residue chain is L-serine dehydratase TdcG (454 aa).

It belongs to the iron-sulfur dependent L-serine dehydratase family. The cofactor is [4Fe-4S] cluster.

The enzyme catalyses L-serine = pyruvate + NH4(+). It functions in the pathway amino-acid degradation; L-threonine degradation via propanoate pathway. The sequence is that of L-serine dehydratase TdcG (tdcG) from Escherichia coli (strain K12).